A 429-amino-acid chain; its full sequence is Melanoma-associated antigen 11 (429 aa).

2 disordered regions span residues 1–30 (METQFRRGGLGCSPASIKRKKKREDSGDFG) and 188–215 (IFGSLSDEGSGSQEKEGPSTSPDLIDPE). Positions 194 to 209 (DEGSGSQEKEGPSTSP) are enriched in polar residues. An MAGE domain is found at 222-421 (LHDKIIDLVH…TSYPSLYEDA (200 aa)).

In terms of tissue distribution, expressed in tumors of several types, such as melanoma, head and neck squamous cell carcinoma, lung carcinoma and breast carcinoma. Expressed in testis, ovary, prostate, cancerous prostate, breast and adrenal tissue.

The protein localises to the nucleus. Its subcellular location is the cytoplasm. Acts as androgen receptor coregulator that increases androgen receptor activity by modulating the receptors interdomain interaction. May play a role in embryonal development and tumor transformation or aspects of tumor progression. The protein is Melanoma-associated antigen 11 of Homo sapiens (Human).